The sequence spans 591 residues: Aspartate--tRNA(Asp/Asn) ligase (591 aa).

Glu-174 contacts L-aspartate. Residues 198-201 (QLFK) are aspartate. Arg-220 provides a ligand contact to L-aspartate. ATP contacts are provided by residues 220 to 222 (RDE) and Gln-229. His-450 is a binding site for L-aspartate. ATP is bound at residue Glu-483. Arg-490 contacts L-aspartate. 535 to 538 (GLDR) contacts ATP.

It belongs to the class-II aminoacyl-tRNA synthetase family. Type 1 subfamily. In terms of assembly, homodimer.

The protein localises to the cytoplasm. The catalysed reaction is tRNA(Asx) + L-aspartate + ATP = L-aspartyl-tRNA(Asx) + AMP + diphosphate. Functionally, aspartyl-tRNA synthetase with relaxed tRNA specificity since it is able to aspartylate not only its cognate tRNA(Asp) but also tRNA(Asn). Reaction proceeds in two steps: L-aspartate is first activated by ATP to form Asp-AMP and then transferred to the acceptor end of tRNA(Asp/Asn). The protein is Aspartate--tRNA(Asp/Asn) ligase of Pseudomonas putida (strain ATCC 700007 / DSM 6899 / JCM 31910 / BCRC 17059 / LMG 24140 / F1).